Here is a 73-residue protein sequence, read N- to C-terminus: Large ribosomal subunit protein uL29 (73 aa).

It belongs to the universal ribosomal protein uL29 family.

The sequence is that of Large ribosomal subunit protein uL29 (rpmC) from Aquifex aeolicus (strain VF5).